Consider the following 278-residue polypeptide: 4-diphosphocytidyl-2-C-methyl-D-erythritol kinase (278 aa).

The active site involves lysine 9. Proline 89 to alanine 99 contacts ATP. Aspartate 128 is an active-site residue.

The protein belongs to the GHMP kinase family. IspE subfamily.

It carries out the reaction 4-CDP-2-C-methyl-D-erythritol + ATP = 4-CDP-2-C-methyl-D-erythritol 2-phosphate + ADP + H(+). It participates in isoprenoid biosynthesis; isopentenyl diphosphate biosynthesis via DXP pathway; isopentenyl diphosphate from 1-deoxy-D-xylulose 5-phosphate: step 3/6. In terms of biological role, catalyzes the phosphorylation of the position 2 hydroxy group of 4-diphosphocytidyl-2C-methyl-D-erythritol. The chain is 4-diphosphocytidyl-2-C-methyl-D-erythritol kinase from Cereibacter sphaeroides (strain KD131 / KCTC 12085) (Rhodobacter sphaeroides).